The primary structure comprises 477 residues: Cysteine--tRNA ligase (477 aa).

Cys28 contacts Zn(2+). A 'HIGH' region motif is present at residues 30–40 (PTVYDYPHLGH). Zn(2+) is bound by residues Cys208, His233, and Glu237. The short motif at 265–269 (KMSKS) is the 'KMSKS' region element. Lys268 contributes to the ATP binding site.

This sequence belongs to the class-I aminoacyl-tRNA synthetase family. Zn(2+) serves as cofactor.

It is found in the cytoplasm. The enzyme catalyses tRNA(Cys) + L-cysteine + ATP = L-cysteinyl-tRNA(Cys) + AMP + diphosphate. In Pyrococcus furiosus (strain ATCC 43587 / DSM 3638 / JCM 8422 / Vc1), this protein is Cysteine--tRNA ligase.